A 630-amino-acid chain; its full sequence is SHC-transforming protein 4 (630 aa).

The interval 1-185 (MRERGQDSLA…RQDRHFLQHL (185 aa)) is CH2. Disordered regions lie at residues 39–80 (TSLD…QESP) and 118–150 (KLQE…QQDL). Low complexity predominate over residues 125 to 142 (PGSSGPSSPETSLSRSGT). Positions 186 to 369 (LGMGMNYCVR…VHIDSHAEER (184 aa)) constitute a PID domain. Residues 370 to 525 (EDHEYYNEIP…HIKQQLWSEE (156 aa)) are CH1. At Tyr-424 the chain carries Phosphotyrosine. Composition is skewed to polar residues over residues 471 to 486 (LQST…SAQP) and 502 to 513 (PGATAQPASSHS). The tract at residues 471 to 514 (LQSTPGSAGNQRSAQPLGSPWHCGKAPETVQPGATAQPASSHSL) is disordered. One can recognise an SH2 domain in the interval 526-617 (CYHGKLSRKA…GSEVSLKQPV (92 aa)).

As to quaternary structure, interacts (via PID domain) with phosphorylated MUSK (via NPXY motif); undergoes tyrosine phosphorylation downstream of activated MUSK. Interacts with GRB2; the interaction is dependent of Tyr-424 phosphorylation and increased by EGF. Phosphorylated; the phosphorylation is enhanced by EGF. Phosphorylation at Tyr-424 is required for the interaction with GRB2. In terms of tissue distribution, only expressed in melanomas. Weakly expressed in normal melanocytes and benign nevi. Highly expressed at the transition from radial growth phase to vertical growth phase and metastatic melanomas, when tumor cells acquire migratory competence and invasive potential.

The protein localises to the postsynaptic cell membrane. Functionally, activates both Ras-dependent and Ras-independent migratory pathways in melanomas. Contributes to the early phases of agrin-induced tyrosine phosphorylation of CHRNB1. This is SHC-transforming protein 4 (SHC4) from Homo sapiens (Human).